Here is a 285-residue protein sequence, read N- to C-terminus: Polyamine aminopropyltransferase (285 aa).

Positions 5–241 (DSWFTEHFQA…GWWSVTLSSK (237 aa)) constitute a PABS domain. Gln-35 contributes to the S-methyl-5'-thioadenosine binding site. Residues His-66 and Asp-90 each contribute to the spermidine site. Residues Asp-110 and 141–142 (DG) contribute to the S-methyl-5'-thioadenosine site. Catalysis depends on Asp-160, which acts as the Proton acceptor. 160 to 163 (DSTD) is a binding site for spermidine. S-methyl-5'-thioadenosine is bound at residue Pro-167.

It belongs to the spermidine/spermine synthase family. As to quaternary structure, homodimer or homotetramer.

Its subcellular location is the cytoplasm. It carries out the reaction S-adenosyl 3-(methylsulfanyl)propylamine + putrescine = S-methyl-5'-thioadenosine + spermidine + H(+). It participates in amine and polyamine biosynthesis; spermidine biosynthesis; spermidine from putrescine: step 1/1. Catalyzes the irreversible transfer of a propylamine group from the amino donor S-adenosylmethioninamine (decarboxy-AdoMet) to putrescine (1,4-diaminobutane) to yield spermidine. This Xylella fastidiosa (strain 9a5c) protein is Polyamine aminopropyltransferase.